We begin with the raw amino-acid sequence, 449 residues long: Glucose-6-phosphate isomerase (449 aa).

The active-site Proton donor is glutamate 291. Residues histidine 312 and lysine 426 contribute to the active site.

It belongs to the GPI family.

The protein localises to the cytoplasm. The catalysed reaction is alpha-D-glucose 6-phosphate = beta-D-fructose 6-phosphate. Its pathway is carbohydrate biosynthesis; gluconeogenesis. It functions in the pathway carbohydrate degradation; glycolysis; D-glyceraldehyde 3-phosphate and glycerone phosphate from D-glucose: step 2/4. Functionally, catalyzes the reversible isomerization of glucose-6-phosphate to fructose-6-phosphate. This Streptococcus equi subsp. zooepidemicus (strain MGCS10565) protein is Glucose-6-phosphate isomerase.